A 327-amino-acid polypeptide reads, in one-letter code: Vacuolar protein sorting-associated protein 26A (327 aa).

Residues 306-327 form a disordered region; it reads RTNFHQRFESPESQASAEQPEM. Position 315 is a phosphoserine (serine 315). A compositionally biased stretch (polar residues) spans 316 to 327; sequence PESQASAEQPEM.

This sequence belongs to the VPS26 family. In terms of assembly, component of the heterotrimeric retromer cargo-selective complex (CSC), also described as vacuolar protein sorting subcomplex (VPS), formed by VPS26 (VPS26A or VPS26B), VPS29 and VPS35. The CSC has a highly elongated structure with VPS26 and VPS29 binding independently at opposite distal ends of VPS35 as central platform. The CSC is believed to associate with variable sorting nexins to form functionally distinct retromer complex variants. The originally described retromer complex (also called SNX-BAR retromer) is a pentamer containing the CSC and a heterodimeric membrane-deforming subcomplex formed between SNX1 or SNX2 and SNX5 or SNX6 (also called SNX-BAR subcomplex); the respective CSC and SNX-BAR subcomplexes associate with low affinity. The CSC associates with SNX3 to form a SNX3-retromer complex. The CSC associates with SNX27, the WASH complex and the SNX-BAR subcomplex to form the SNX27-retromer complex. Interacts with VPS29, VPS35, SNX27, SNX1, SNX2, SNX5, SNX6, SNX3, RAB7A, ECPAS, EHD1, WASHC5, SORL1.

Its subcellular location is the cytoplasm. It localises to the endosome membrane. The protein resides in the early endosome. In terms of biological role, acts as a component of the retromer cargo-selective complex (CSC). The CSC is believed to be the core functional component of retromer or respective retromer complex variants acting to prevent missorting of selected transmembrane cargo proteins into the lysosomal degradation pathway. The recruitment of the CSC to the endosomal membrane involves RAB7A and SNX3. The SNX-BAR retromer mediates retrograde transport of cargo proteins from endosomes to the trans-Golgi network (TGN) and is involved in endosome-to-plasma membrane transport for cargo protein recycling. The SNX3-retromer mediates the retrograde endosome-to-TGN transport of WLS distinct from the SNX-BAR retromer pathway. The SNX27-retromer is believed to be involved in endosome-to-plasma membrane trafficking and recycling of a broad spectrum of cargo proteins. The CSC complex seems to act as recruitment hub for other proteins, such as the WASH complex and TBC1D5. Required for retrograde transport of lysosomal enzyme receptor IGF2R. Required to regulate transcytosis of the polymeric immunoglobulin receptor (pIgR-pIgA). Required for the endosomal localization of WASHC2 (indicative for the WASH complex). Required for the endosomal localization of TBC1D5. Mediates retromer cargo recognition of SORL1 and is involved in trafficking of SORL1 implicated in sorting and processing of APP. Involved in retromer-independent lysosomal sorting of F2R. Involved in recycling of ADRB2. Acts redundantly with VSP26B in SNX-27 mediated endocytic recycling of SLC2A1/GLUT1. Enhances the affinity of SNX27 for PDZ-binding motifs in cargo proteins. This chain is Vacuolar protein sorting-associated protein 26A (VPS26A), found in Bos taurus (Bovine).